Consider the following 255-residue polypeptide: Formate hydrogenlyase subunit 7 (255 aa).

Positions 45, 51, 115, and 145 each coordinate [4Fe-4S] cluster.

The protein belongs to the complex I 20 kDa subunit family. FHL comprises of a formate dehydrogenase, unidentified electron carriers and a hydrogenase (isoenzyme 3). In this non-energy conserving pathway molecular hydrogen and carbodioxide from formate are released. [4Fe-4S] cluster serves as cofactor.

This is Formate hydrogenlyase subunit 7 (hycG) from Escherichia coli (strain K12).